The primary structure comprises 1866 residues: Protein strawberry notch homolog (1866 aa).

Positions 19-28 are enriched in low complexity; that stretch reads QQSSPTPSTS. Disordered regions lie at residues 19–63, 132–151, 156–253, 561–581, and 1112–1308; these read QQSS…HSSS, TAPT…IVPK, LFET…GLPI, GMAS…QKAK, and GLSG…ARGS. Composition is skewed to polar residues over residues 37-63 and 134-146; these read QSFS…HSSS and PTVN…TPTV. The span at 161-176 shows a compositional bias: low complexity; sequence TADSPTPSGDTSTTAS. Polar residues-rich tracts occupy residues 191-203 and 210-228; these read DRQN…TARS and TPST…LTQR. Residues 229-239 are compositionally biased toward low complexity; it reads SHTSSPASSAS. The segment covering 566-577 has biased composition (polar residues); sequence RLQTTPQPLTKS. A compositionally biased stretch (low complexity) spans 1112–1126; the sequence is GLSGIGRSSMSSSTG. Acidic residues predominate over residues 1142–1152; it reads DGSDDEVENDM. Positions 1164-1177 are enriched in basic and acidic residues; the sequence is ESAREEAEGARTLE. A compositionally biased stretch (acidic residues) spans 1194 to 1213; that stretch reads SSSDDSDEEVVKDEDEDEEA. 2 stretches are compositionally biased toward basic and acidic residues: residues 1262 to 1281 and 1290 to 1304; these read RDEE…EERR and RRAE…EELQ.

This sequence belongs to the SBNO family. Expressed in the somatic gonad, neurons, hypodermal cells, seam cells, the excretory system, and intestinal cells (at protein level).

It is found in the nucleus. In terms of biological role, transcriptional activator that functions upstream of the let-60/Ras and let-23/EGFR signaling pathways to positively regulate lin-3 expression and thereby promote vulval induction. Plays a role in excretory duct development. Plays a role in male tail development. This Caenorhabditis elegans protein is Protein strawberry notch homolog.